Consider the following 139-residue polypeptide: Bilirubin-inducible fluorescent protein UnaG (139 aa).

(4Z,15Z)-bilirubin IXalpha-binding positions include asparagine 57, threonine 61, serine 80, arginine 112, and 132–134 (RSY).

This sequence belongs to the calycin superfamily. Fatty-acid binding protein (FABP) family. In terms of assembly, monomer. Detected in small-diameter muscle fibers from the white muscle layer from juvenile animals (glass eels) (at protein level). Detected in small-diameter muscle fibers from juvenile animals (glass eels).

The protein resides in the cytoplasm. In terms of biological role, beta-barrel protein that binds unconjugated bilirubin with high affinity. Excitation of the bilirubin-bound protein gives rise to green fluorescence, both under normoxia and hypoxia. The apoprotein is not fluorescent. Does not emit fluorescence in the presence of ditauro-bilirubin, urobilin or biliverdin. This is Bilirubin-inducible fluorescent protein UnaG from Anguilla japonica (Japanese eel).